Consider the following 249-residue polypeptide: Adenylate kinase (249 aa).

An ATP-binding site is contributed by Gly43–Thr48. The NMP stretch occupies residues Ala63 to Val92. AMP-binding positions include Thr64, Arg69, Gly90–Val92, Gly119–Arg122, and Gln126. The LID stretch occupies residues Gly160–Asp197. Residues Arg161 and Ser170–Tyr171 contribute to the ATP site. Residues Pro177 to Asp197 are disordered. 2 residues coordinate AMP: Arg194 and Arg205. Gln233 is an ATP binding site.

The protein belongs to the adenylate kinase family. AK2 subfamily. As to quaternary structure, monomer.

Its subcellular location is the cytoplasm. The protein localises to the cytosol. It is found in the mitochondrion intermembrane space. It carries out the reaction AMP + ATP = 2 ADP. Functionally, catalyzes the reversible transfer of the terminal phosphate group between ATP and AMP. Plays an important role in cellular energy homeostasis and in adenine nucleotide metabolism. Adenylate kinase activity is critical for regulation of the phosphate utilization and the AMP de novo biosynthesis pathways. This chain is Adenylate kinase, found in Candida albicans (strain SC5314 / ATCC MYA-2876) (Yeast).